Here is a 355-residue protein sequence, read N- to C-terminus: MIKVMHIFSRMNRGGAELRTMDTMKLLNREFEFHVCATSGKRGELDDELESMGITIHYLDIKKFSFPFKFIKLLKKKNIDVVHSHILFMSGLIQLLSFSANVRNRITHFRTSKDSKEQYNKIRKARNKVLKAIIEIFSTKILYVSNIANRNLISMKLFPKKHKTIYNGFEISNINKNFKKEENSFIYVGRFIHTKNQLFLLDVIEILKKEFNTNIEITFVGNIQTDYGKKFLSIANERGLNKNIKVIGEVNNPLDYLKTSEYFLFPSELEGLPGALIEAHHHNCIVISSNIKENSEVNQYFKDSSFELELIPKTWASTIKKLISRKKHISFNDSNVFDINMTTQELKEIYMSKTL.

This sequence belongs to the glycosyltransferase group 1 family. Glycosyltransferase 4 subfamily.

The protein operates within capsule biogenesis; capsule polysaccharide biosynthesis. Functionally, required for the biosynthesis of type 1 capsular polysaccharide. In Staphylococcus aureus, this protein is Capsular polysaccharide biosynthesis glycosyltransferase CapH (capH).